A 1112-amino-acid chain; its full sequence is Carbamoyl phosphate synthase large chain (1112 aa).

The interval 1–407 (MPRRTDLRHV…ALGKVMRSLE (407 aa)) is carboxyphosphate synthetic domain. Residues arginine 134, arginine 174, glycine 180, glycine 181, glutamate 213, isoleucine 215, glutamate 220, glycine 246, valine 247, histidine 248, glutamine 290, and glutamate 304 each coordinate ATP. One can recognise an ATP-grasp 1 domain in the interval 138–333 (KDIVTKVGGE…IAKIAAKLAI (196 aa)). Positions 290, 304, and 306 each coordinate Mg(2+). Mn(2+)-binding residues include glutamine 290, glutamate 304, and asparagine 306. The segment at 408–559 (TGRAGFWTAP…ELDPAAESEV (152 aa)) is oligomerization domain. The tract at residues 560 to 965 (APQAERPKVL…AFAKSQTAAY (406 aa)) is carbamoyl phosphate synthetic domain. Positions 693–884 (GEVLRTAGLP…LAKACARIML (192 aa)) constitute an ATP-grasp 2 domain. Residues arginine 729, arginine 768, leucine 770, glutamate 775, glycine 800, isoleucine 801, histidine 802, serine 803, glutamine 843, and glutamate 855 each coordinate ATP. Glutamine 843, glutamate 855, and asparagine 857 together coordinate Mg(2+). Residues glutamine 843, glutamate 855, and asparagine 857 each coordinate Mn(2+). The MGS-like domain occupies 966–1112 (GSLPSEGTVF…LQELHSELGN (147 aa)). The allosteric domain stretch occupies residues 966 to 1112 (GSLPSEGTVF…LQELHSELGN (147 aa)).

The protein belongs to the CarB family. Composed of two chains; the small (or glutamine) chain promotes the hydrolysis of glutamine to ammonia, which is used by the large (or ammonia) chain to synthesize carbamoyl phosphate. Tetramer of heterodimers (alpha,beta)4. Mg(2+) serves as cofactor. It depends on Mn(2+) as a cofactor.

The catalysed reaction is hydrogencarbonate + L-glutamine + 2 ATP + H2O = carbamoyl phosphate + L-glutamate + 2 ADP + phosphate + 2 H(+). The enzyme catalyses hydrogencarbonate + NH4(+) + 2 ATP = carbamoyl phosphate + 2 ADP + phosphate + 2 H(+). Its pathway is amino-acid biosynthesis; L-arginine biosynthesis; carbamoyl phosphate from bicarbonate: step 1/1. The protein operates within pyrimidine metabolism; UMP biosynthesis via de novo pathway; (S)-dihydroorotate from bicarbonate: step 1/3. Functionally, large subunit of the glutamine-dependent carbamoyl phosphate synthetase (CPSase). CPSase catalyzes the formation of carbamoyl phosphate from the ammonia moiety of glutamine, carbonate, and phosphate donated by ATP, constituting the first step of 2 biosynthetic pathways, one leading to arginine and/or urea and the other to pyrimidine nucleotides. The large subunit (synthetase) binds the substrates ammonia (free or transferred from glutamine from the small subunit), hydrogencarbonate and ATP and carries out an ATP-coupled ligase reaction, activating hydrogencarbonate by forming carboxy phosphate which reacts with ammonia to form carbamoyl phosphate. The sequence is that of Carbamoyl phosphate synthase large chain from Mycobacterium sp. (strain JLS).